A 430-amino-acid chain; its full sequence is UDP-N-acetylglucosamine 1-carboxyvinyltransferase (430 aa).

22-23 is a binding site for phosphoenolpyruvate; the sequence is KN. Arg-102 is a UDP-N-acetyl-alpha-D-glucosamine binding site. Catalysis depends on Cys-126, which acts as the Proton donor. Cys-126 bears the 2-(S-cysteinyl)pyruvic acid O-phosphothioketal mark. Residues 131-135, 172-175, Asp-317, and Ile-339 each bind UDP-N-acetyl-alpha-D-glucosamine; these read RPVDL and KVSV.

This sequence belongs to the EPSP synthase family. MurA subfamily.

It is found in the cytoplasm. It catalyses the reaction phosphoenolpyruvate + UDP-N-acetyl-alpha-D-glucosamine = UDP-N-acetyl-3-O-(1-carboxyvinyl)-alpha-D-glucosamine + phosphate. The protein operates within cell wall biogenesis; peptidoglycan biosynthesis. Cell wall formation. Adds enolpyruvyl to UDP-N-acetylglucosamine. This chain is UDP-N-acetylglucosamine 1-carboxyvinyltransferase, found in Rhizobium etli (strain ATCC 51251 / DSM 11541 / JCM 21823 / NBRC 15573 / CFN 42).